Reading from the N-terminus, the 799-residue chain is Oxygen sensor protein DosP (799 aa).

The PAS 1 domain maps to 10-81 (ADGIFFPALE…YIRHNREGGK (72 aa)). Heme is bound by residues histidine 69 and methionine 87. One can recognise a PAS 2 domain in the interval 134–207 (QTRQLIIAVD…LQQLLWKTAR (74 aa)). One can recognise a PAC domain in the interval 208-260 (DQDEFLLLTRTGEKIWIKASISPVYDVLAHLQNLVMTFSDITEERQIRQLEGN). Residues 402-532 (VSPVVYLIGV…GGNGWQFFSP (131 aa)) enclose the GGDEF domain. Residues 541–795 (RLVLGAALKE…EIPGWMSSVL (255 aa)) form the EAL domain.

As to quaternary structure, homodimer; has been previously suggested to be a homotetramer based on size exclusion chromatography. Forms a complex with DosC. It depends on heme as a cofactor. Mg(2+) is required as a cofactor. The heme distal ligand is coordinated by Met-87 in the active Fe(2+) (ferrous) form, by O(2) in the O(2)-bound form and by H(2)O in the inactive Fe(3+) (ferric) form.

The catalysed reaction is 3',3'-c-di-GMP + H2O = 5'-phosphoguanylyl(3'-&gt;5')guanosine + H(+). With respect to regulation, has c-di-GMP PDE activity in both Fe(2+) and Fe(3+)-bound forms; this activity is increased 6-7 fold by binding of O(2) and CO and NO. Has cAMP PDE activity only when the heme is in the Fe(2+) form. cAMP PDE activity is inhibited by oxidation of the heme iron and by binding of external ligands such as CO and NO. Also strongly inhibited by etazolate hydrochloride, a selective cAMP PDE inhibitor. PDE activity is inhibited in the absence of oxygen. Functionally, heme-based oxygen sensor protein displaying phosphodiesterase (PDE) activity toward c-di-GMP in response to oxygen availability. Involved in the modulation of intracellular c-di-GMP levels, in association with DosC which catalyzes the biosynthesis of c-di-GMP (diguanylate cyclase activity). Cyclic-di-GMP is a second messenger which controls cell surface-associated traits in bacteria. Has very poor PDE activity on cAMP but is not active with cGMP, bis(p-nitrophenyl) phosphate or p-nitrophenyl phosphate. Via its PDE activity on c-di-GMP, DosP regulates biofilm formation through the repression of transcription of the csgBAC operon, which encodes curli structural subunits. The polypeptide is Oxygen sensor protein DosP (dosP) (Escherichia coli (strain K12)).